Here is a 246-residue protein sequence, read N- to C-terminus: Probable transcriptional regulatory protein Dshi_2762 (246 aa).

Belongs to the TACO1 family.

It localises to the cytoplasm. This Dinoroseobacter shibae (strain DSM 16493 / NCIMB 14021 / DFL 12) protein is Probable transcriptional regulatory protein Dshi_2762.